A 430-amino-acid polypeptide reads, in one-letter code: Adenylosuccinate synthetase (430 aa).

GTP is bound by residues 12-18 (GDEGKGK) and 40-42 (GHT). Residue Asp-13 is the Proton acceptor of the active site. Mg(2+) contacts are provided by Asp-13 and Gly-40. Residues 13-16 (DEGK), 38-41 (NAGH), Thr-128, Arg-142, Gln-223, Thr-238, and Arg-302 each bind IMP. His-41 (proton donor) is an active-site residue. 298–304 (TTTGRPR) contacts substrate. Residues Arg-304, 330–332 (SID), and 412–414 (SVG) contribute to the GTP site.

This sequence belongs to the adenylosuccinate synthetase family. Homodimer. The cofactor is Mg(2+).

It is found in the cytoplasm. The enzyme catalyses IMP + L-aspartate + GTP = N(6)-(1,2-dicarboxyethyl)-AMP + GDP + phosphate + 2 H(+). The protein operates within purine metabolism; AMP biosynthesis via de novo pathway; AMP from IMP: step 1/2. Plays an important role in the de novo pathway of purine nucleotide biosynthesis. Catalyzes the first committed step in the biosynthesis of AMP from IMP. This is Adenylosuccinate synthetase from Streptococcus pyogenes serotype M49 (strain NZ131).